The chain runs to 1065 residues: Outer capsid protein VP3 (1065 aa).

The protein localises to the virion. It catalyses the reaction a 5'-end diphospho-ribonucleoside in mRNA + GTP + H(+) = a 5'-end (5'-triphosphoguanosine)-ribonucleoside in mRNA + diphosphate. The catalysed reaction is a 5'-end (5'-triphosphoguanosine)-ribonucleoside in mRNA + S-adenosyl-L-methionine = a 5'-end (N(7)-methyl 5'-triphosphoguanosine)-ribonucleoside in mRNA + S-adenosyl-L-homocysteine. In terms of biological role, outer capsid protein involved in mRNA capping. Catalyzes the last 3 enzymatic activities for formation of the 5' cap structure on the viral plus-strand transcripts, namely the RNA guanylyltransferase, RNA-7N- and RNA-2'O-methyltransferase activities. In Cryphonectria parasitica mycoreovirus 1 (strain 9B21) (CpMYRV-1), this protein is Outer capsid protein VP3 (S3).